We begin with the raw amino-acid sequence, 118 residues long: NADH-ubiquinone oxidoreductase chain 3 (118 aa).

2 helical membrane-spanning segments follow: residues 4–24 (FAPICIYLVISLLVSLIPLGV) and 87–107 (IDPFGSWSMMAFLLILTIGSL).

The protein belongs to the complex I subunit 3 family.

It is found in the mitochondrion membrane. It catalyses the reaction a ubiquinone + NADH + 5 H(+)(in) = a ubiquinol + NAD(+) + 4 H(+)(out). Its function is as follows. Core subunit of the mitochondrial membrane respiratory chain NADH dehydrogenase (Complex I) that is believed to belong to the minimal assembly required for catalysis. Complex I functions in the transfer of electrons from NADH to the respiratory chain. The immediate electron acceptor for the enzyme is believed to be ubiquinone. In Panax ginseng (Korean ginseng), this protein is NADH-ubiquinone oxidoreductase chain 3 (ND3).